Here is a 350-residue protein sequence, read N- to C-terminus: tRNA uridine(34) hydroxylase (350 aa).

Positions 146–240 (DDPEAVFVDM…YARRAREQGL (95 aa)) constitute a Rhodanese domain. C200 (cysteine persulfide intermediate) is an active-site residue.

Belongs to the TrhO family.

It carries out the reaction uridine(34) in tRNA + AH2 + O2 = 5-hydroxyuridine(34) in tRNA + A + H2O. Functionally, catalyzes oxygen-dependent 5-hydroxyuridine (ho5U) modification at position 34 in tRNAs. The protein is tRNA uridine(34) hydroxylase of Erwinia tasmaniensis (strain DSM 17950 / CFBP 7177 / CIP 109463 / NCPPB 4357 / Et1/99).